The chain runs to 502 residues: QRTTGRDALRTNILAARAISEMIKTTYGPKGMDKMLVDALGDVTITNDGATILDKAEIQHPAAKMLVQVAKSQDSEVGDGTKRAVILAGELLKYAEELLDKNIHPTVIISGYRMAMEEALKILDQMAEPIDLNNEELLRKVARTSLTSKAVHDAREFFADIAVKAVKQVVEKRGDKNYVDLDNIQIIKKYGGALLDSMLVYGIVLDKEVVHPGMPRRVENAKIVLLDAPLEIEKPEIDAEIRINDPEQLEKFLQQEEEILMKMVDKIASVGANVVVCQKGIDEVAQHFLAKKGILAVRRVKRSDLEKLERATGGRIVSNIEDLTPEDLGYAALVEERKVGEDKMVFIEGCKNPRSVSIVIRGGLERLVDEAERSIRDALSAVADALRDGKVIPGGGAAEIELAKHIRRLATRVGGKEQLAIEAFAKALEGLAVTLVENAGLDPIDMVMKLRAAHEREDGKYLSIDLATGDLVNMREKGVIEPVSILANAIKAGTEAATIIMR.

The protein belongs to the TCP-1 chaperonin family. In terms of assembly, forms a Heterooligomeric complex of two stacked eight-membered rings.

Molecular chaperone; binds unfolded polypeptides in vitro, and has a weak ATPase activity. The chain is Thermosome subunit beta (thsB) from Desulfurococcus mucosus (Desulfurococcus mobilis).